We begin with the raw amino-acid sequence, 332 residues long: Cilia- and flagella-associated protein 119 (332 aa).

Residues Met1–Leu10 are compositionally biased toward polar residues. Disordered stretches follow at residues Met1 to Phe70, Glu246 to Gln271, and Arg308 to Lys332. Residues Val14–Arg30 are compositionally biased toward basic and acidic residues. The segment covering Glu49–Pro58 has biased composition (polar residues). Positions Leu287–Arg308 form a coiled coil.

In terms of tissue distribution, specifically expressed in testis (at protein level).

Its subcellular location is the cell projection. It localises to the cilium. It is found in the flagellum. The protein localises to the cytoplasmic vesicle. The protein resides in the secretory vesicle. Its subcellular location is the acrosome. It localises to the cytoplasm. The polypeptide is Cilia- and flagella-associated protein 119 (Rattus norvegicus (Rat)).